The chain runs to 188 residues: MKKIGVLALQGAVDEHIQMIKSAGALPSKVKHPSDLNELDGLVLPGGESTTMRKIMKRYDLIEPVRAFAKEGKAIFGTCAGLVLLSKEIEGGEESLGLIDTTAVRNGFGRQKESFEAELNVEIFSDAPFEAVFIRAPYLIEPSPEVSVLATFEDKIVAAKEANILVTAFHPELTNDNRFMRFFIEKMV.

47–49 lines the L-glutamine pocket; sequence GES. The Nucleophile role is filled by Cys-79. Residues Arg-105 and 134–135 each bind L-glutamine; that span reads IR. Active-site charge relay system residues include His-170 and Glu-172.

This sequence belongs to the glutaminase PdxT/SNO family. In terms of assembly, in the presence of PdxS, forms a dodecamer of heterodimers. Only shows activity in the heterodimer.

It catalyses the reaction aldehydo-D-ribose 5-phosphate + D-glyceraldehyde 3-phosphate + L-glutamine = pyridoxal 5'-phosphate + L-glutamate + phosphate + 3 H2O + H(+). The enzyme catalyses L-glutamine + H2O = L-glutamate + NH4(+). It functions in the pathway cofactor biosynthesis; pyridoxal 5'-phosphate biosynthesis. In terms of biological role, catalyzes the hydrolysis of glutamine to glutamate and ammonia as part of the biosynthesis of pyridoxal 5'-phosphate. The resulting ammonia molecule is channeled to the active site of PdxS. In Listeria welshimeri serovar 6b (strain ATCC 35897 / DSM 20650 / CCUG 15529 / CIP 8149 / NCTC 11857 / SLCC 5334 / V8), this protein is Pyridoxal 5'-phosphate synthase subunit PdxT.